We begin with the raw amino-acid sequence, 137 residues long: Large ribosomal subunit protein uL16c (137 aa).

The protein belongs to the universal ribosomal protein uL16 family. As to quaternary structure, part of the 50S ribosomal subunit.

Its subcellular location is the plastid. The polypeptide is Large ribosomal subunit protein uL16c (Aneura mirabilis (Parasitic liverwort)).